We begin with the raw amino-acid sequence, 512 residues long: Matrix metalloproteinase-27 (512 aa).

Positions 1–17 are cleaved as a signal peptide; it reads MKSFLLLFLLFVTFSSA. Positions 18 to 98 are cleaved as a propeptide — activation peptide; the sequence is LPADQKMENE…PRCGVPDVGQ (81 aa). Residues 89–96 carry the Cysteine switch motif; it reads PRCGVPDV. Cysteine 91 lines the Zn(2+) pocket. Asparagine 110 carries N-linked (GlcNAc...) asparagine glycosylation. 2 residues coordinate Ca(2+): aspartate 121 and aspartate 155. Zn(2+) is bound at residue histidine 165. Residues aspartate 173, glycine 174, and valine 178 each contribute to the Ca(2+) site. A Zn(2+)-binding site is contributed by histidine 181. Residues glycine 188 and aspartate 192 each coordinate Ca(2+). Histidine 194 is a binding site for Zn(2+). Aspartate 196 and glutamate 199 together coordinate Ca(2+). Zn(2+) is bound at residue histidine 216. Glutamate 217 is a catalytic residue. The Zn(2+) site is built by histidine 220 and histidine 226. 4 Hemopexin repeats span residues 276–325, 326–371, 373–421, and 422–465; these read PHAC…WPSL, PADL…GFPR, VKKI…FPGI, and GLRV…WFQC. An intrachain disulfide couples cysteine 279 to cysteine 465. Aspartate 286 is a binding site for Ca(2+). Positions 377 and 426 each coordinate Ca(2+). The required for retention in the endoplasmic reticulum stretch occupies residues 466–512; sequence KEPLNSSLDFHFNQEKAYSGEVETLHHQSLSLLIFGIVHLLNKICSY.

This sequence belongs to the peptidase M10A family. It depends on Ca(2+) as a cofactor. Requires Zn(2+) as cofactor. Post-translationally, N-glycosylated.

Its subcellular location is the endoplasmic reticulum. Its function is as follows. Matrix metalloproteinases degrade protein components of the extracellular matrix such as fibronectin, laminin, gelatins and/or collagens. In Tupaia belangeri (Common tree shrew), this protein is Matrix metalloproteinase-27 (MMP27).